We begin with the raw amino-acid sequence, 64 residues long: Conotoxin VnMRCL-04 (64 aa).

The first 22 residues, 1-22 (MRCLPVFVILLLLIASAPSVDA), serve as a signal peptide directing secretion. The propeptide occupies 23-48 (RPKTKDDVPLASFHGNAERTLLNILR). At W63 the chain carries Tryptophan amide.

This sequence belongs to the conotoxin T superfamily. Post-translationally, contains 2 disulfide bonds that can be either 'C1-C3, C2-C4' or 'C1-C4, C2-C3', since these disulfide connectivities have been observed for conotoxins with cysteine framework V (for examples, see AC P0DQQ7 and AC P81755). In terms of tissue distribution, expressed by the venom duct.

It is found in the secreted. The polypeptide is Conotoxin VnMRCL-04 (Conus ventricosus (Mediterranean cone)).